The primary structure comprises 106 residues: Class II hydrophobin 6 (106 aa).

The signal sequence occupies residues 1–16 (MQFFTVATLFLATAFA). Cystine bridges form between Cys36–Cys86, Cys47–Cys77, Cys48–Cys60, and Cys87–Cys98.

Belongs to the cerato-ulmin hydrophobin family. As to quaternary structure, homodimer. Homodimers further self-assemble to form highly ordered films at water-air interfaces through intermolecular interactions.

It localises to the secreted. Its subcellular location is the cell wall. Functionally, aerial growth, conidiation, and dispersal of filamentous fungi in the environment rely upon a capability of their secreting small amphipathic proteins called hydrophobins (HPBs) with low sequence identity. Class I can self-assemble into an outermost layer of rodlet bundles on aerial cell surfaces, conferring cellular hydrophobicity that supports fungal growth, development and dispersal; whereas Class II form highly ordered films at water-air interfaces through intermolecular interactions but contribute nothing to the rodlet structure. HFB2-6 is a class II hydrophobin that has a function in root colonization. Acts as an effector in poplar by up-regulating the expression of genes related to both the jasmonic acid and salicylic acid signal transduction pathways, which not only causes induced systemic resistance (ISR), but also systemic acquired resistance (SAR), giving poplar broad-spectrum resistance to pathogens. Also induces genes related to auxin signal transduction to promote poplar growth. Plays roles in interactions with both biotic and abiotic environmental conditions such as the presence of the pathogen Alternaria alternata or nutrient starvation conditions. The protein is Class II hydrophobin 6 of Trichoderma asperellum (strain ATCC 204424 / CBS 433.97 / NBRC 101777).